The following is a 100-amino-acid chain: MTAAHFMTDPQAMRDMARKFDMHAQNVRDESHKMFMSSMDIAGAGWSGTAQLTSHDTMGQINQAFRHIVTLLQDVRDQLGTAADRYEHQEENSRKILSGS.

This sequence belongs to the WXG100 family.

This is Putative ESAT-6-like protein Y from Mycobacterium leprae (strain TN).